The sequence spans 344 residues: Protein RecA (344 aa).

An ATP-binding site is contributed by 65 to 72 (GPESSGKT).

This sequence belongs to the RecA family.

Its subcellular location is the cytoplasm. Functionally, can catalyze the hydrolysis of ATP in the presence of single-stranded DNA, the ATP-dependent uptake of single-stranded DNA by duplex DNA, and the ATP-dependent hybridization of homologous single-stranded DNAs. It interacts with LexA causing its activation and leading to its autocatalytic cleavage. The protein is Protein RecA of Xanthomonas oryzae pv. oryzae (strain PXO99A).